The sequence spans 260 residues: Exosome complex component Rrp4 (260 aa).

Positions 59-128 (NDVVIGIVIV…SSMKVELALR (70 aa)) constitute an S1 motif domain. Residues 136–194 (KTGQIIKVESVKVPRVIGHGGSMISMLKKETNCSIFVGQNGRIWIDGKDEDIELLSKAL) form the KH domain.

This sequence belongs to the RRP4 family. As to quaternary structure, component of the archaeal exosome complex. Forms a trimer of Rrp4 and/or Csl4 subunits. The trimer associates with a hexameric ring-like arrangement composed of 3 Rrp41-Rrp42 heterodimers.

It is found in the cytoplasm. Functionally, non-catalytic component of the exosome, which is a complex involved in RNA degradation. Increases the RNA binding and the efficiency of RNA degradation. Confers strong poly(A) specificity to the exosome. This is Exosome complex component Rrp4 from Methanosarcina acetivorans (strain ATCC 35395 / DSM 2834 / JCM 12185 / C2A).